The following is a 314-amino-acid chain: Small ribosomal subunit protein uS11m (314 aa).

Residues 1–37 (MNGVSRHLRASSLLSLIRSYGGINSVCRFSSQSDGFS) constitute a mitochondrion transit peptide. Residues 34-138 (DGFSGGRFRE…GSGFSAPSLS (105 aa)) form a disordered region. A compositionally biased stretch (polar residues) spans 50–63 (ESANNSGLSNTGRI). Over residues 103–114 (SSLRSRLPNSLP) the composition is skewed to low complexity.

Belongs to the universal ribosomal protein uS11 family. As to quaternary structure, component of the mitochondrial ribosome small subunit (28S) which comprises a 12S rRNA and about 30 distinct proteins.

Its subcellular location is the mitochondrion. Its function is as follows. Required for karyogamy during female gametophyte development, when the two polar nuclei fuse to form the diploid central cell nucleus. The sequence is that of Small ribosomal subunit protein uS11m from Arabidopsis thaliana (Mouse-ear cress).